Here is a 396-residue protein sequence, read N- to C-terminus: Vacuolar protease A (396 aa).

Positions 1–17 are cleaved as a signal peptide; that stretch reads MKGALLTAAMLLGSAQA. Positions 18–70 are cleaved as a propeptide — activation peptide; the sequence is GVHTMKLKKVPLAEQLESVPIDVQVQHLGQKYTGLRTESHTQAMFKATDAQVS. One can recognise a Peptidase A1 domain in the interval 85-392; sequence YFSEITIGTP…DLGADTVGIA (308 aa). Aspartate 103 is a catalytic residue. The cysteines at positions 116 and 121 are disulfide-linked. The N-linked (GlcNAc...) asparagine glycan is linked to asparagine 138. Aspartate 284 is an active-site residue. Cysteine 318 and cysteine 351 are oxidised to a cystine. Asparagine 335 carries an N-linked (GlcNAc...) asparagine glycan.

Belongs to the peptidase A1 family.

Its subcellular location is the vacuole. The polypeptide is Vacuolar protease A (pep-4) (Neurospora crassa (strain ATCC 24698 / 74-OR23-1A / CBS 708.71 / DSM 1257 / FGSC 987)).